The following is a 414-amino-acid chain: MATQRASGLLQRLAQGSLVKQILVGLVLGILLAWVSKPAAEAVGLLGTLFVGALKAVAPILVLMLVMASIANHQHGQKTNIRPILFLYLLGTFSAALAAVVFSFAFPSTLHLSSSAQDIVPPSGIVEVLRGLLISMVSNPIDALLNANYIGILVWAVGLGFALRHGNETTKNLVNDMSNAVTFMVKLVIRFAPVGIFGLVSSTLATTGFSTLWGYAHLLVVLIGCMLLVALVVNPLLVFWKIRRNPYPLVFACLRESGVYAFFTRSSAANIPVNMALCEKLNLDRDTYSVSIPLGATINMAGAAITITVLTLAAVHTLGVPVDLPTALLLSVVASLCACGASGVAGGSLLLIPLACNMFGIPNDIAMQVVAVGFIIGVLQDSCETALNSSTDVLFTAAACQAEDERLANNALRS.

The next 8 membrane-spanning stretches (helical) occupy residues 16 to 36 (GSLV…AWVS), 46 to 66 (LGTL…LMLV), 84 to 104 (ILFL…VFSF), 143 to 163 (ALLN…GFAL), 180 to 200 (AVTF…FGLV), 219 to 239 (LVVL…LLVF), 300 to 320 (MAGA…TLGV), and 332 to 352 (VVAS…LLLI).

This sequence belongs to the dicarboxylate/amino acid:cation symporter (DAACS) (TC 2.A.23) family.

It is found in the cell inner membrane. The catalysed reaction is L-serine(in) + Na(+)(in) = L-serine(out) + Na(+)(out). It catalyses the reaction L-threonine(in) + Na(+)(in) = L-threonine(out) + Na(+)(out). Its function is as follows. Involved in the import of serine and threonine into the cell, with the concomitant import of sodium (symport system). The polypeptide is Serine/threonine transporter SstT (Salmonella arizonae (strain ATCC BAA-731 / CDC346-86 / RSK2980)).